The following is a 596-amino-acid chain: Aspartate--tRNA(Asp/Asn) ligase (596 aa).

Glutamate 169 contacts L-aspartate. An aspartate region spans residues 193 to 196; that stretch reads QLFK. Position 215 (arginine 215) interacts with L-aspartate. Residues 215 to 217 and glutamine 224 contribute to the ATP site; that span reads RDE. Histidine 447 is a binding site for L-aspartate. Glutamate 481 is an ATP binding site. Arginine 488 serves as a coordination point for L-aspartate. 533–536 serves as a coordination point for ATP; sequence GWDR. A disordered region spans residues 559–596; that stretch reads GYDPLTQAPAPITAQQRKEAGVDFKPEAKKADPGATKA. A compositionally biased stretch (basic and acidic residues) spans 574–590; that stretch reads QRKEAGVDFKPEAKKAD.

It belongs to the class-II aminoacyl-tRNA synthetase family. Type 1 subfamily. Homodimer.

Its subcellular location is the cytoplasm. It carries out the reaction tRNA(Asx) + L-aspartate + ATP = L-aspartyl-tRNA(Asx) + AMP + diphosphate. Aspartyl-tRNA synthetase with relaxed tRNA specificity since it is able to aspartylate not only its cognate tRNA(Asp) but also tRNA(Asn). Reaction proceeds in two steps: L-aspartate is first activated by ATP to form Asp-AMP and then transferred to the acceptor end of tRNA(Asp/Asn). This is Aspartate--tRNA(Asp/Asn) ligase from Arthrobacter sp. (strain FB24).